Here is a 50-residue protein sequence, read N- to C-terminus: U2-ctenitoxin-Pk1a (50 aa).

Cystine bridges form between Cys1/Cys15, Cys8/Cys21, Cys12/Cys47, Cys14/Cys31, and Cys23/Cys29.

Expressed by the venom gland.

It localises to the secreted. Its function is as follows. Insecticidal neurotoxin that reversibly inhibits the N-methyl-D-aspartate (NMDA)-subtype of ionotropic glutamate receptor (GRIN) and inhibits inactivation of insect sodium channels (Nav). In vivo, is highly toxic to insects. The protein is U2-ctenitoxin-Pk1a of Phoneutria keyserlingi (Brazilian wandering spider).